The following is a 39-amino-acid chain: Potassium channel toxin alpha-KTx 2.9 (39 aa).

Intrachain disulfides connect Cys7–Cys29, Cys13–Cys34, and Cys17–Cys36. Position 39 is an asparagine amide (Asn39).

Belongs to the short scorpion toxin superfamily. Potassium channel inhibitor family. Alpha-KTx 02 subfamily. Expressed by the venom gland.

Its subcellular location is the secreted. Functionally, blocks Kv1.3/KCNA3 voltage-gated potassium channels of human T-lymphocytes (Kd=0.25 nM). The chain is Potassium channel toxin alpha-KTx 2.9 from Centruroides elegans (Bark scorpion).